Reading from the N-terminus, the 644-residue chain is Zinc finger protein 568 (644 aa).

Residues 48 to 119 enclose the KRAB domain; the sequence is VTFKDVAVDL…EEEMFGRHCP (72 aa). C2H2-type zinc fingers lie at residues 222-244, 250-272, 278-300, 306-328, 334-356, 362-384, 390-412, 418-440, 446-468, 474-496, 502-524, 530-552, 558-580, 586-608, and 614-636; these read FKCNQCGQDFSHKFDLIRHERIH, YECKECGKAFSRKENLITHQKIH, YKCNECGKAFIQMSNLIRHHRIH, YACKDCWKAFSQKSNLIEHERIH, YECKECGKSFSQKQNLIEHEKIH, YACNECGRAFSRMSSVTLHMRSH, YKCNKCGKAFSQCSVFIIHMRSH, YVCSECGKAFSQSSSLTVHMRNH, YECSECGKAFIQMSNLIRHQRIH, YACTVCGKAFSQKSNLTEHEKIH, YHCNQCGKAFSQRQNLLEHEKIH, FKCNECGKAFSRISSLTLHVRSH, YECNKCGKAFSQCSLLIIHMRSH, and FECNECGKAFSQRASLSIHKRGH.

The protein belongs to the krueppel C2H2-type zinc-finger protein family. In terms of assembly, interacts with TRIM28.

The protein localises to the nucleus. Functionally, has transcriptional repression activity, partially through the recruitment of the corepressor TRIM28 but also has repression activity independently of this interaction. Essential during embryonic development, where it acts as a direct repressor of a placental-specific transcript of IGF2 in early development and regulates convergent extension movements required for axis elongation and tissue morphogenesis in all germ layers. Also important for normal morphogenesis of extraembryonic tissues including the yolk sac, extraembryonic mesoderm and placenta. May enhance proliferation or maintenance of neural stem cells. The chain is Zinc finger protein 568 (ZNF568) from Homo sapiens (Human).